The sequence spans 218 residues: Adenylate kinase (218 aa).

Residue 10 to 15 participates in ATP binding; that stretch reads GAGKGT. The NMP stretch occupies residues 30–59; sequence STGDMFRAAMANQTEMGRLAKSFIDKGELV. AMP is bound by residues Thr31, Arg36, 57–59, 86–89, and Gln93; these read ELV and GYPR. Residues 127 to 165 form an LID region; the sequence is GRFICRSCGSTYHKVFNPTKVEGTCDVCGGHEFFQREDD. Arg128 contacts ATP. 2 residues coordinate Zn(2+): Cys131 and Cys134. 137 to 138 serves as a coordination point for ATP; sequence TY. Cys151 and Cys154 together coordinate Zn(2+). AMP-binding residues include Arg162 and Arg173. Residue Gln201 participates in ATP binding.

This sequence belongs to the adenylate kinase family. Monomer.

Its subcellular location is the cytoplasm. The catalysed reaction is AMP + ATP = 2 ADP. It participates in purine metabolism; AMP biosynthesis via salvage pathway; AMP from ADP: step 1/1. Catalyzes the reversible transfer of the terminal phosphate group between ATP and AMP. Plays an important role in cellular energy homeostasis and in adenine nucleotide metabolism. The polypeptide is Adenylate kinase (Streptococcus thermophilus (strain CNRZ 1066)).